Reading from the N-terminus, the 94-residue chain is Translation initiation factor 1A 2 (94 aa).

The region spanning 6–80 (GRRNLRMPSD…EKANIEWRYS (75 aa)) is the S1-like domain.

This sequence belongs to the eIF-1A family.

Seems to be required for maximal rate of protein biosynthesis. Enhances ribosome dissociation into subunits and stabilizes the binding of the initiator Met-tRNA(I) to 40 S ribosomal subunits. This Haloquadratum walsbyi (strain DSM 16790 / HBSQ001) protein is Translation initiation factor 1A 2.